Here is a 452-residue protein sequence, read N- to C-terminus: Na(+)/H(+) antiporter NhaA (452 aa).

A run of 11 helical transmembrane segments spans residues 23-43 (MMLF…LSTI), 71-91 (LLQF…GLEI), 108-128 (LPIV…LLVV), 136-156 (GAAI…AVLG), 165-185 (VFLT…IALF), 189-209 (HINI…YLMG), 216-236 (LGLY…SGIH), 316-336 (IVGY…TLGG), 349-369 (VFLG…YGFV), 385-405 (LMAV…IATL), and 418-438 (EAKL…IVTL).

It belongs to the NhaA Na(+)/H(+) (TC 2.A.33) antiporter family.

Its subcellular location is the cell inner membrane. The catalysed reaction is Na(+)(in) + 2 H(+)(out) = Na(+)(out) + 2 H(+)(in). In terms of biological role, na(+)/H(+) antiporter that extrudes sodium in exchange for external protons. This Porphyromonas gingivalis (strain ATCC 33277 / DSM 20709 / CIP 103683 / JCM 12257 / NCTC 11834 / 2561) protein is Na(+)/H(+) antiporter NhaA.